The chain runs to 139 residues: MAPKVAEKKPSLAGKAPAGKAPAEKKEAGKKTTTATGEKKKRTKARKETYSSYIYKVLKQTHPDTGISTRAMSIMNSFVNDIFERVATEASKLATYTKKSTITSREIQTAVRLILPGELAKHATGDGTRAVAKYSTFDN.

The segment covering 1–10 (MAPKVAEKKP) has biased composition (basic and acidic residues). The tract at residues 1-47 (MAPKVAEKKPSLAGKAPAGKAPAEKKEAGKKTTTATGEKKKRTKARK) is disordered. Residues K8 and K9 each carry the N6-acetyllysine; alternate modification. Glycyl lysine isopeptide (Lys-Gly) (interchain with G-Cter in SUMO); alternate cross-links involve residues K8 and K9. K15 is modified (N6-acetyllysine). K25 bears the N6-acetyllysine; alternate mark. K25 is covalently cross-linked (Glycyl lysine isopeptide (Lys-Gly) (interchain with G-Cter in SUMO); alternate). A Glycyl lysine isopeptide (Lys-Gly) (interchain with G-Cter in SUMO) cross-link involves residue K26. K133 is covalently cross-linked (Glycyl lysine isopeptide (Lys-Gly) (interchain with G-Cter in ubiquitin)).

The protein belongs to the histone H2B family. The nucleosome is a histone octamer containing two molecules each of H2A, H2B, H3 and H4 assembled in one H3-H4 heterotetramer and two H2A-H2B heterodimers. The octamer wraps approximately 147 bp of DNA. Post-translationally, monoubiquitinated by the UBC2-BRE1 complex to form H2BK123ub1. H2BK123ub1 gives a specific tag for epigenetic transcriptional activation and is also prerequisite for H3K4me and H3K79me formation. H2BK123ub1 also modulates the formation of double-strand breaks during meiosis and is a prerequisite for DNA-damage checkpoint activation. In terms of processing, acetylated by GCN5 to form H2BK11ac and H2BK16ac. H2BK16ac can also be formed by ESA1. Acetylation of N-terminal lysines and particularly formation of H2BK11acK16ac has a positive effect on transcription. Sumoylation to form H2BK6su or H2BK7su, and probably also H2BK16su or H2BK17su, occurs preferentially near the telomeres and represses gene transcription.

It is found in the nucleus. The protein resides in the chromosome. Its function is as follows. Core component of nucleosome. Nucleosomes wrap and compact DNA into chromatin, limiting DNA accessibility to the cellular machineries which require DNA as a template. Histones thereby play a central role in transcription regulation, DNA repair, DNA replication and chromosomal stability. DNA accessibility is regulated via a complex set of post-translational modifications of histones, also called histone code, and nucleosome remodeling. In Yarrowia lipolytica (strain CLIB 122 / E 150) (Yeast), this protein is Histone H2B (HTB1).